The following is a 341-amino-acid chain: MVQHITLHDMTLRDGMHPKRHQISLEQMKDIARGLDAAGVPLIEVTHGDGLGGASVNYGFPAHSDEEYLRAVLGELKQARVSALLLPGIGTVDHLRMAHEIGVHTIRVATHCTEADVSEQHIGMARKLGMDTVGFLMMAHMAPVQTLVQQALLMESYGANCLYITDSAGHMLPHDVTEKLGAVRQALRPETELGFHGHHNLAMGVANSLAAIACGASRIDAAAAGLGAGAGNTPMEVLVAVCERMGIETGVDVYRIADVAEDLVVPIMDHPIRIDRDALTLGYAGVYSSFLLFAKRAEAKYRIPAREILVELGRQRLVGGQEDMIEDTAITLARERGLLVP.

A Pyruvate carboxyltransferase domain is found at 5 to 257; that stretch reads ITLHDMTLRD…ETGVDVYRIA (253 aa). 13–14 serves as a coordination point for substrate; it reads RD. Asp14 serves as a coordination point for Mn(2+). Residue His17 is the Proton acceptor of the active site. Substrate contacts are provided by Ser167 and His196. The Mn(2+) site is built by His196 and His198. Tyr287 is a binding site for substrate.

Belongs to the 4-hydroxy-2-oxovalerate aldolase family.

It carries out the reaction (S)-4-hydroxy-2-oxopentanoate = acetaldehyde + pyruvate. The chain is 4-hydroxy-2-oxovalerate aldolase 3 (bpHI) from Cupriavidus necator (strain ATCC 17699 / DSM 428 / KCTC 22496 / NCIMB 10442 / H16 / Stanier 337) (Ralstonia eutropha).